The primary structure comprises 556 residues: Arginine--tRNA ligase (556 aa).

The 'HIGH' region signature appears at 132–142 (ANPTGDLHLGH).

The protein belongs to the class-I aminoacyl-tRNA synthetase family. Monomer.

The protein resides in the cytoplasm. It catalyses the reaction tRNA(Arg) + L-arginine + ATP = L-arginyl-tRNA(Arg) + AMP + diphosphate. The protein is Arginine--tRNA ligase (argS) of Bacillus subtilis (strain 168).